The sequence spans 249 residues: MIT domain-containing protein 1 (249 aa).

An MIT domain is found at Q8–G86. The segment at R168–R231 is important for association with membranes.

Homodimer. Interacts (via MIT domain) with CHMP1A, CHMP1B, CHMP2A and IST1.

The protein resides in the late endosome membrane. It is found in the midbody. Its subcellular location is the membrane. Functionally, required for efficient abscission at the end of cytokinesis, together with components of the ESCRT-III complex. This chain is MIT domain-containing protein 1 (MITD1), found in Homo sapiens (Human).